A 906-amino-acid polypeptide reads, in one-letter code: Catenin alpha-1 (906 aa).

T2 is modified (N-acetylthreonine). Positions 2-228 are involved in homodimerization; it reads TAVHAGNINF…PILYTASQAC (227 aa). Residue K57 forms a Glycyl lysine isopeptide (Lys-Gly) (interchain with G-Cter in SUMO2) linkage. An interaction with JUP and CTNNB1 region spans residues 97-148; the sequence is VRKQGDLMKSAAGEFADDPCSSVKRGNMVRAARALLSAVTRLLILADMADVY. Phosphoserine occurs at positions 264, 295, and 297. Positions 325–394 are interaction with alpha-actinin; it reads TRDDRRERIV…AVMDHVSDSF (70 aa). T634 is subject to Phosphothreonine. At S641 the chain carries Phosphoserine. T645 is modified (phosphothreonine). Phosphoserine is present on residues S652 and S655. At T658 the chain carries Phosphothreonine. Residue K797 forms a Glycyl lysine isopeptide (Lys-Gly) (interchain with G-Cter in SUMO2) linkage. The residue at position 851 (S851) is a Phosphoserine. A compositionally biased stretch (basic and acidic residues) spans 864-880; the sequence is PEKKPLVKREKQDETQT. The tract at residues 864-894 is disordered; that stretch reads PEKKPLVKREKQDETQTKIKRASQKKHVNPV. The span at 881–891 shows a compositional bias: basic residues; it reads KIKRASQKKHV.

Belongs to the vinculin/alpha-catenin family. In terms of assembly, monomer and homodimer; the monomer preferentially binds to CTNNB1 and the homodimer to actin. Component of an cadherin:catenin adhesion complex composed of at least of CDH26, beta-catenin/CTNNB1, alpha-catenin/CTNNA1 and p120 catenin/CTNND1. Possible component of an E-cadherin/ catenin adhesion complex together with E-cadherin/CDH1 and beta-catenin/CTNNB1 or gamma-catenin/JUP; the complex is located to adherens junctions. The stable association of CTNNA1 is controversial as CTNNA1 was shown not to bind to F-actin when assembled in the complex. Alternatively, the CTNNA1-containing complex may be linked to F-actin by other proteins such as LIMA1. Binds AFDN and F-actin. Interacts with LIMA1. Interacts with ARHGAP21. Interacts with AJUBA. Interacts with vinculin/VCL. Interacts with TJP2/ZO2 (via N-terminus). Interacts with TJP1/ZO1 (via N-terminus). Post-translationally, sumoylated. In terms of processing, phosphorylation seems to contribute to the strength of cell-cell adhesion rather than to the basic capacity for cell-cell adhesion. In terms of tissue distribution, expressed in cerebellum, heart, liver, small intestine, kidney and placenta (at protein level).

The protein resides in the cytoplasm. It localises to the cytoskeleton. It is found in the cell junction. The protein localises to the adherens junction. Its subcellular location is the cell membrane. The protein resides in the nucleus. In terms of biological role, associates with the cytoplasmic domain of a variety of cadherins. The association of catenins to cadherins produces a complex which is linked to the actin filament network, and which seems to be of primary importance for cadherins cell-adhesion properties. Can associate with both E- and N-cadherins. Originally believed to be a stable component of E-cadherin/catenin adhesion complexes and to mediate the linkage of cadherins to the actin cytoskeleton at adherens junctions. In contrast, cortical actin was found to be much more dynamic than E-cadherin/catenin complexes and CTNNA1 was shown not to bind to F-actin when assembled in the complex suggesting a different linkage between actin and adherens junctions components. The homodimeric form may regulate actin filament assembly and inhibit actin branching by competing with the Arp2/3 complex for binding to actin filaments. Involved in the regulation of WWTR1/TAZ, YAP1 and TGFB1-dependent SMAD2 and SMAD3 nuclear accumulation. May play a crucial role in cell differentiation. This is Catenin alpha-1 from Mus musculus (Mouse).